Reading from the N-terminus, the 136-residue chain is Large-conductance mechanosensitive channel (136 aa).

2 helical membrane passes run F10–G30 and G76–I96.

It belongs to the MscL family. As to quaternary structure, homopentamer.

The protein localises to the cell inner membrane. Channel that opens in response to stretch forces in the membrane lipid bilayer. May participate in the regulation of osmotic pressure changes within the cell. The chain is Large-conductance mechanosensitive channel from Escherichia coli O139:H28 (strain E24377A / ETEC).